The primary structure comprises 179 residues: MAVSQTTLWNLISGILGVICLLLMTTMGILLKNLLLTESIQPTLSPGPITELQKGSDCCSCPKRWIGHQCNCYLFFDELKSWTESRDFCASQNSSLLHIQNRDELRFVSSSKYFYWIGVYYSKENGTWLWENGLALPQDLLQTIQTFDTKKCVIYSSSHSVLDVSCEDKSRFICKQELM.

Topologically, residues 1-10 (MAVSQTTLWN) are cytoplasmic. Residues 11–31 (LISGILGVICLLLMTTMGILL) form a helical; Signal-anchor for type II membrane protein membrane-spanning segment. Over 32–179 (KNLLLTESIQ…SRFICKQELM (148 aa)) the chain is Extracellular. 4 disulfide bridges follow: C58-C70, C61-C72, C89-C174, and C152-C166. Residues 68–175 (HQCNCYLFFD…CEDKSRFICK (108 aa)) enclose the C-type lectin domain. N93 and N125 each carry an N-linked (GlcNAc...) asparagine glycan.

As to quaternary structure, can form disulfide-bonded heterodimer with NKG2 family members KLRC1 and KLRC2. KLRD1-KLRC1 heterodimer interacts with peptide-bound MHC-E-B2M heterotrimeric complex. KLRD1 plays a prominent role in directly interacting with MHC-E. KLRD1-KLRC1 interacts with much higher affinity with peptide-bound MHC-E-B2M than KLRD1-KLRC2. Interacts with the adapter protein TYROBP/DAP12; this interaction is required for cell surface expression and cell activation.

Its subcellular location is the cell membrane. Functionally, immune receptor involved in self-nonself discrimination. In complex with KLRC1 or KLRC2 on cytotoxic and regulatory lymphocyte subsets, recognizes non-classical major histocompatibility (MHC) class Ib molecule MHC-E loaded with self-peptides derived from the signal sequence of classical MHC class Ia and non-classical MHC class Ib molecules. Enables cytotoxic cells to monitor the expression of MHC class I molecules in healthy cells and to tolerate self. Primarily functions as a ligand binding subunit as it lacks the capacity to signal. In terms of biological role, KLRD1-KLRC1 acts as an immune inhibitory receptor. Key inhibitory receptor on natural killer (NK) cells that regulates their activation and effector functions. Dominantly counteracts T cell receptor signaling on a subset of memory/effector CD8-positive T cells as part of an antigen-driven response to avoid autoimmunity. On intraepithelial CD8-positive gamma-delta regulatory T cells triggers TGFB1 secretion, which in turn limits the cytotoxic programming of intraepithelial CD8-positive alpha-beta T cells, distinguishing harmless from pathogenic antigens. In MHC-E-rich tumor microenvironment, acts as an immune inhibitory checkpoint and may contribute to progressive loss of effector functions of NK cells and tumor-specific T cells, a state known as cell exhaustion. Upon MHC-E-peptide binding, transmits intracellular signals through KLRC1 immunoreceptor tyrosine-based inhibition motifs (ITIMs) by recruiting INPP5D/SHIP-1 and INPPL1/SHIP-2 tyrosine phosphatases to ITIMs, and ultimately opposing signals transmitted by activating receptors through dephosphorylation of proximal signaling molecules. Its function is as follows. KLRD1-KLRC2 acts as an immune activating receptor. On cytotoxic lymphocyte subsets recognizes MHC-E loaded with signal sequence-derived peptides from non-classical MHC class Ib MHC-G molecules, likely playing a role in the generation and effector functions of adaptive NK cells and in maternal-fetal tolerance during pregnancy. Regulates the effector functions of terminally differentiated cytotoxic lymphocyte subsets, and in particular may play a role in adaptive NK cell response to viral infection. Upon MHC-E-peptide binding, transmits intracellular signals via the adapter protein TYROBP/DAP12, triggering the phosphorylation of proximal signaling molecules and cell activation. The protein is Natural killer cells antigen CD94 (KLRD1) of Canis lupus familiaris (Dog).